A 362-amino-acid polypeptide reads, in one-letter code: S-adenosylmethionine:tRNA ribosyltransferase-isomerase (362 aa).

Belongs to the QueA family. In terms of assembly, monomer.

The protein resides in the cytoplasm. It catalyses the reaction 7-aminomethyl-7-carbaguanosine(34) in tRNA + S-adenosyl-L-methionine = epoxyqueuosine(34) in tRNA + adenine + L-methionine + 2 H(+). The protein operates within tRNA modification; tRNA-queuosine biosynthesis. Functionally, transfers and isomerizes the ribose moiety from AdoMet to the 7-aminomethyl group of 7-deazaguanine (preQ1-tRNA) to give epoxyqueuosine (oQ-tRNA). The polypeptide is S-adenosylmethionine:tRNA ribosyltransferase-isomerase (Syntrophus aciditrophicus (strain SB)).